The primary structure comprises 797 residues: Inactive deaminase YBR284W (797 aa).

The helical transmembrane segment at 627 to 647 (LVYLFYLSQIPMVVAPLNSIV) threads the bilayer.

Belongs to the metallo-dependent hydrolases superfamily. Adenosine and AMP deaminases family.

It is found in the membrane. This chain is Inactive deaminase YBR284W, found in Saccharomyces cerevisiae (strain ATCC 204508 / S288c) (Baker's yeast).